A 325-amino-acid chain; its full sequence is Olfactory receptor 1S2 (325 aa).

At 1–38 the chain is on the extracellular side; that stretch reads MKTLCSFLQISRNMHQENQTTITEFILLGLSNQAEHQN. N18 carries N-linked (GlcNAc...) asparagine glycosylation. The helical transmembrane segment at 39-62 threads the bilayer; the sequence is LLFVLFLSMYVVTVVGNGLIIVAI. The Cytoplasmic segment spans residues 63–70; that stretch reads SLDIYLHT. Residues 71–92 form a helical membrane-spanning segment; sequence PMYLFLAYLSFADISSISNSVP. Residues 93–113 are Extracellular-facing; that stretch reads KMLVNIQTNSQSISYESCITQ. A disulfide bridge connects residues C110 and C202. A helical transmembrane segment spans residues 114 to 133; it reads MYFSIVFVVTDNLLLGTMAF. Over 134 to 152 the chain is Cytoplasmic; it reads DHFVAICHPLNYTTFMRAR. The chain crosses the membrane as a helical span at residues 153-171; the sequence is FGTLLTVISWFLSNIIALT. Topologically, residues 172–208 are extracellular; sequence HTLLLIQLLFCDHNTLPHFFCDLAPLLKLSCSDTMIN. Residues 209–232 form a helical membrane-spanning segment; sequence ELVLFIVGLSVIIFPFVLIFFSYV. The Cytoplasmic segment spans residues 233–249; the sequence is CIIRAVLGVSSTQGKWK. Residues 250-272 traverse the membrane as a helical segment; the sequence is AFSTCGSHLTIALLFYGTTVGVY. Over 273-285 the chain is Extracellular; the sequence is FFPSSTHPEDTDK. A helical membrane pass occupies residues 286–305; sequence IGAVLFTVVTPMMNPFIYSL. Residues 306–325 lie on the Cytoplasmic side of the membrane; it reads RNKDMKGALRKLINRKISSL.

This sequence belongs to the G-protein coupled receptor 1 family.

Its subcellular location is the cell membrane. Its function is as follows. Odorant receptor. This chain is Olfactory receptor 1S2 (OR1S2), found in Homo sapiens (Human).